The chain runs to 370 residues: Proto-oncogene Wnt-1 (370 aa).

A signal peptide spans 1-27; sequence MGLWALLPGWVSATLLLALAALPAALA. N-linked (GlcNAc...) asparagine glycosylation occurs at Asn-29. Cystine bridges form between Cys-93–Cys-104, Cys-143–Cys-151, Cys-153–Cys-170, Cys-218–Cys-232, Cys-220–Cys-227, Cys-299–Cys-330, Cys-315–Cys-325, Cys-329–Cys-369, Cys-345–Cys-360, Cys-347–Cys-357, and Cys-352–Cys-353. Ser-224 carries O-palmitoleoyl serine; by PORCN lipidation. N-linked (GlcNAc...) asparagine glycans are attached at residues Asn-316 and Asn-346. Asn-359 is a glycosylation site (N-linked (GlcNAc...) asparagine).

This sequence belongs to the Wnt family. Forms a soluble 1:1 complex with AFM; this prevents oligomerization and is required for prolonged biological activity. The complex with AFM may represent the physiological form in body fluids. Interacts with PORCN. Interacts with RSPO1, RSPO2 and RSPO3. Interacts with WLS. In terms of processing, palmitoleoylation is required for efficient binding to frizzled receptors. Palmitoleoylation is necessary for proper trafficking to cell surface. Depalmitoleoylated by NOTUM, leading to inhibit Wnt signaling pathway.

Its subcellular location is the secreted. It localises to the extracellular space. The protein localises to the extracellular matrix. Functionally, ligand for members of the frizzled family of seven transmembrane receptors. Acts in the canonical Wnt signaling pathway by promoting beta-catenin-dependent transcriptional activation. In some developmental processes, is also a ligand for the coreceptor RYK, thus triggering Wnt signaling. Plays an essential role in the development of the embryonic brain and central nervous system (CNS). Has a role in osteoblast function, bone development and bone homeostasis. This is Proto-oncogene Wnt-1 (WNT1) from Homo sapiens (Human).